The following is a 61-amino-acid chain: Short neurotoxin 2 (61 aa).

Cystine bridges form between cysteine 3-cysteine 23, cysteine 17-cysteine 40, cysteine 42-cysteine 53, and cysteine 54-cysteine 59.

This sequence belongs to the three-finger toxin family. Short-chain subfamily. Type I alpha-neurotoxin sub-subfamily. In terms of tissue distribution, expressed by the venom gland.

It is found in the secreted. Its function is as follows. Binds to muscle nicotinic acetylcholine receptor (nAChR) and inhibit acetylcholine from binding to the receptor, thereby impairing neuromuscular transmission. The polypeptide is Short neurotoxin 2 (Naja nivea (Cape cobra)).